Here is a 485-residue protein sequence, read N- to C-terminus: Trk system potassium uptake protein TrkG (485 aa).

The Cytoplasmic segment spans residues 1-5; sequence MNTSH. A helical membrane pass occupies residues 6-32; sequence VRVVTHMCGFLVWLYSLSMLPPMVVAL. Residues 33–38 lie on the Periplasmic side of the membrane; sequence FYKEKS. The chain crosses the membrane as a helical span at residues 39 to 60; the sequence is LFVFFITFVIFFCIGGGAWYTT. Residues 61 to 68 lie on the Cytoplasmic side of the membrane; the sequence is KKSGIQLR. A helical transmembrane segment spans residues 69–93; the sequence is TRDGFIIIVMFWILFSVISAFPLWI. The helical; Pore-forming intramembrane region spans 101-112; it reads FIDALFEGVSGI. An intramembrane segment occupies 113–118; that stretch reads TTTGAT. A selectivity filter part 1 region spans residues 113-118; sequence TTTGAT. K(+)-binding residues include Thr-114 and Thr-115. Residues 119–127 are Periplasmic-facing; it reads VIDDVSSLP. Residues 128 to 153 form a helical membrane-spanning segment; the sequence is RAYLYYRSQLNFIGGLGVIVLAVAVL. The Cytoplasmic portion of the chain corresponds to 154–180; it reads PLLGIGGAKLYQSEMPGPFKDDKLTPR. The helical transmembrane segment at 181-205 threads the bilayer; it reads LADTSRTLWITYSLLGIACIVCYRL. The Periplasmic segment spans residues 206–208; it reads AGM. Pro-209 is an intramembrane region. The helical; Pore-forming intramembrane region spans 210–221; the sequence is LFDAICHGISTV. The stretch at 222 to 227 is an intramembrane region; it reads SLGGFS. A selectivity filter part 2 region spans residues 222–227; that stretch reads SLGGFS. Residues Leu-223 and Gly-224 each coordinate K(+). Residues 228–237 are Periplasmic-facing; it reads THSESIGYFN. Residues 238–253 constitute an intramembrane region (helical); that stretch reads NYLVELVAGSFSLLSA. The chain crosses the membrane as a helical span at residues 277 to 297; that stretch reads LRFFLLIALGVIIVTSFQVWH. The segment at residues 303-318 is an intramembrane region (helical; Pore-forming); that stretch reads LHGSFIHSFFLASSML. An intramembrane segment occupies 319-324; that stretch reads TDNGLA. Residues 319–324 are selectivity filter part 3; that stretch reads TDNGLA. Residues Asp-320 and Asn-321 each coordinate K(+). Over 325-332 the chain is Periplasmic; it reads TQDYASWP. Residues 333–344 constitute an intramembrane region (helical); the sequence is THTIVFLLLSSF. The note=Loop between two helices intramembrane region spans 345-357; that stretch reads FGGCIGSTCGGIK. A helical transmembrane segment spans residues 392 to 419; sequence TDRVMRSVWSFFFLYTLFTVFFILVLNG. The Periplasmic portion of the chain corresponds to 420–421; sequence MG. Residues 422–423 lie within the membrane without spanning it; the sequence is YD. The segment at residues 424–434 is an intramembrane region (helical; Pore-forming); the sequence is FLTSFATVAAC. The stretch at 435–441 is an intramembrane region; it reads INNMGLG. Residues 436-441 are selectivity filter part 4; sequence NNMGLG. Residues Asn-437 and Met-438 each coordinate K(+). The Periplasmic portion of the chain corresponds to 442 to 453; the sequence is FGATASSFGVLN. The segment at residues 454–465 is an intramembrane region (helical); sequence DIAKCLMCIAMI.

The protein belongs to the TrkH potassium transport family.

Its subcellular location is the cell inner membrane. In terms of biological role, low-affinity potassium transport system. Interacts with Trk system potassium uptake protein TrkA. Requires TrkE (sapD) for maximal transport activity, low activity is seen in its absence; no further stimulation is seen with SapF. Transport in the absence of SapD is dependent on a high membrane potential and a high cytoplasmic ATP concentration, suggesting this protein may be able to interact with other ATP-binding proteins. Can transport potassium and rubidium. This is Trk system potassium uptake protein TrkG (trkG) from Escherichia coli (strain K12).